The chain runs to 71 residues: Sec-independent protein translocase protein TatA (71 aa).

Residues 1 to 21 form a helical membrane-spanning segment; sequence MGSFSLLHWLVVLVIVLLVFG. The disordered stretch occupies residues 43–71; the sequence is LREDDKPTDQLGSTSQSTASGPQQDHGKH. Residues 52–65 are compositionally biased toward polar residues; it reads QLGSTSQSTASGPQ.

This sequence belongs to the TatA/E family. The Tat system comprises two distinct complexes: a TatABC complex, containing multiple copies of TatA, TatB and TatC subunits, and a separate TatA complex, containing only TatA subunits. Substrates initially bind to the TatABC complex, which probably triggers association of the separate TatA complex to form the active translocon.

It is found in the cell inner membrane. Its function is as follows. Part of the twin-arginine translocation (Tat) system that transports large folded proteins containing a characteristic twin-arginine motif in their signal peptide across membranes. TatA could form the protein-conducting channel of the Tat system. The sequence is that of Sec-independent protein translocase protein TatA from Xylella fastidiosa (strain 9a5c).